Here is a 440-residue protein sequence, read N- to C-terminus: MSYFEHIPEIRYEGPQSDNPLAYRHYDKSKKVLGKTLEEHLRIAVCYWHTFVWPGVDIFGQGTFRRPWQQAGDAMERAQQKADSAFEFFSKLGTPYYTFHDTDVSPEGSNLKEYSENFLRITDYLARKQESTGIKLLWGTANLFSHPRYAAGAATSPDPEVFAFAATQVRHALDATQRLGGDNYVLWGGREGYDTLLNTDLVRERDQLARFLHMVVDHAHKIGFKGSLLIEPKPQEPTKHQYDYDVATVHGFLLQHGLDKEIRVNIEANHATLAGHSFHHEIATAYALGIFGSVDANRGDPQNGWDTDQFPNSVEELTLAFYEILKHGGFTTGGMNFDSKVRRQSVDPEDLFYGHIGAIDNLALAVERAAVLIENDRLDQFKRQRYSGWDAEFGRKISSGDYSLSALAEEAMARGLNPQHASGHQELMENIVNQAIYSGR.

Residues histidine 100 and aspartate 103 contribute to the active site. 7 residues coordinate Mg(2+): glutamate 231, glutamate 267, histidine 270, aspartate 295, aspartate 306, aspartate 308, and aspartate 338.

It belongs to the xylose isomerase family. In terms of assembly, homotetramer. Mg(2+) serves as cofactor.

It is found in the cytoplasm. The catalysed reaction is alpha-D-xylose = alpha-D-xylulofuranose. In Paraburkholderia phytofirmans (strain DSM 17436 / LMG 22146 / PsJN) (Burkholderia phytofirmans), this protein is Xylose isomerase.